The following is a 452-amino-acid chain: Protein FAM81B (452 aa).

2 stretches are compositionally biased toward polar residues: residues 1–11 and 38–55; these read MQLQFLGTLAS and IMSS…TATA. The interval 1 to 85 is disordered; the sequence is MQLQFLGTLA…KVRLSPAKMS (85 aa). Coiled-coil stretches lie at residues 164 to 192 and 329 to 452; these read IQTI…DQAA and LGHI…LQEV.

It belongs to the FAM81 family.

In Homo sapiens (Human), this protein is Protein FAM81B (FAM81B).